Reading from the N-terminus, the 349-residue chain is MAFKIASSPHVTRNLHTSTVMQRVILCLLPGLVVQCAFFGWGTLVQVLLAILVALSCEAAVMKLRNRNIKASLSDNSAMLTAILIGVAIPPLAPWWMIVMGTAFAIVIVKHLYGGLGHNLFNPAMAAYVLLLVSFPVQMTTWIAPSTVALHSPSLVESLQLIFNIGAHVNMEQFRLGIDGMTMATPLDTLKTDLSMGLTTTESLTKAIFDGSTGVGWFWVNLAYLAGGLVLLKLKAIRWHISTGVLLGLFVASSIGFLLSPDTQASPLMHLFSGATMLAAFFIATDPVTAATSPRGRIIFGALIGVLVYIIRTKGGYPDAFAFAVLLANLCAPFIDYYVRPRTYGHSTS.

Transmembrane regions (helical) follow at residues 20–42, 77–99, and 124–144; these read VMQR…FGWG, SAML…WMIV, and AMAA…TWIA. Threonine 185 is modified (FMN phosphoryl threonine). Helical transmembrane passes span 212–232, 239–259, 265–285, 291–311, and 315–335; these read STGV…LVLL, WHIS…GFLL, ASPL…FIAT, ATSP…VYII, and GGYP…APFI.

Belongs to the NqrB/RnfD family. The complex is composed of six subunits: RnfA, RnfB, RnfC, RnfD, RnfE and RnfG. It depends on FMN as a cofactor.

The protein resides in the cell inner membrane. Its function is as follows. Part of a membrane-bound complex that couples electron transfer with translocation of ions across the membrane. The protein is Ion-translocating oxidoreductase complex subunit D of Shewanella baltica (strain OS185).